We begin with the raw amino-acid sequence, 364 residues long: sn-glycerol-3-phosphate import ATP-binding protein UgpC (364 aa).

The ABC transporter domain maps to 4–235 (VVLRNVRKTY…PATTFVASFI (232 aa)). 37–44 (GPSGCGKS) contacts ATP.

It belongs to the ABC transporter superfamily. sn-glycerol-3-phosphate importer (TC 3.A.1.1.3) family. The complex is composed of two ATP-binding proteins (UgpC), two transmembrane proteins (UgpA and UgpE) and a solute-binding protein (UgpB).

The protein localises to the cell inner membrane. It catalyses the reaction sn-glycerol 3-phosphate(out) + ATP + H2O = sn-glycerol 3-phosphate(in) + ADP + phosphate + H(+). Its function is as follows. Part of the ABC transporter complex UgpBAEC involved in sn-glycerol-3-phosphate (G3P) import. Responsible for energy coupling to the transport system. In Rhodopseudomonas palustris (strain HaA2), this protein is sn-glycerol-3-phosphate import ATP-binding protein UgpC.